The sequence spans 114 residues: Fumarate reductase subunit D (114 aa).

3 helical membrane-spanning segments follow: residues 24–44 (VSAIFLPVVILIIGLLLPFGL), 50–70 (LITFAYSWIGKLVILVLTIFP), and 92–112 (GGFIFYGLATIYTVWVLFAVI).

This sequence belongs to the FrdD family. As to quaternary structure, part of an enzyme complex containing four subunits: a flavoprotein (FrdA), an iron-sulfur protein (FrdB), and two hydrophobic anchor proteins (FrdC and FrdD).

It localises to the cell inner membrane. Its function is as follows. Anchors the catalytic components of the fumarate reductase complex to the cell membrane, binds quinones. This Haemophilus influenzae (strain PittGG) protein is Fumarate reductase subunit D.